A 327-amino-acid polypeptide reads, in one-letter code: NF-kappa-B inhibitor delta (327 aa).

Residues 1-40 (MEDSLDTRLYPEPSLSQVGSWRVSSLPSGSPQLPSPTGPS) form a disordered region. Positions 14-23 (SLSQVGSWRV) are enriched in polar residues. ANK repeat units lie at residues 62 to 97 (EGDTLLHLFAARGLRWAAYAAAEVLQMYRQLDIREH), 98 to 127 (KGKTPLLVAAAANQPLIVEDLLSLGAEPNA), 131 to 160 (QGRSVLHVAATYGLPGVLSAVFKSGIQVDL), 166 to 215 (EGLT…SHTS), 220 to 250 (SNKTILHLAVQAANPTLVQLLLGLPRGDLRA), and 257 to 290 (HGNTALHMAAALPPGPPQEAIVRHLLAAGADPTL). A disordered region spans residues 293–327 (LENEQPVHLLRPGPGPEGLRQLLKRSRTAPPGLSS).

This sequence belongs to the NF-kappa-B inhibitor family. Interacts with NFKB1, RELA and RELB; in the nucleus. As to expression, specifically expressed in spleen and at low levels in thymus. Expressed in a population of antigen-presenting dendritic cells which may act as regulators of systemic inflammatory response.

It localises to the nucleus. In terms of biological role, regulates the expression of IL-2, IL-6, and other cytokines through regulation on NF-kappa-B activity. Functions in the regulation of inflammatory responses. Involved in the induction of T helper 17 cells (Th17) differentiation upon recognition of antigen by T cell antigen receptor (TCR). According to PubMed:11931770, it may also regulate TCR-induced negative selection of thymocytes. In Mus musculus (Mouse), this protein is NF-kappa-B inhibitor delta (Nfkbid).